A 219-amino-acid polypeptide reads, in one-letter code: Ribose-5-phosphate isomerase A (219 aa).

Residues 28–31, 81–84, and 94–97 contribute to the substrate site; these read TGST, DSAD, and KGGG. Glu103 functions as the Proton acceptor in the catalytic mechanism. Lys121 contacts substrate.

This sequence belongs to the ribose 5-phosphate isomerase family. In terms of assembly, homodimer.

It catalyses the reaction aldehydo-D-ribose 5-phosphate = D-ribulose 5-phosphate. It functions in the pathway carbohydrate degradation; pentose phosphate pathway; D-ribose 5-phosphate from D-ribulose 5-phosphate (non-oxidative stage): step 1/1. Catalyzes the reversible conversion of ribose-5-phosphate to ribulose 5-phosphate. The polypeptide is Ribose-5-phosphate isomerase A (Buchnera aphidicola subsp. Schizaphis graminum (strain Sg)).